The primary structure comprises 578 residues: Proline--tRNA ligase (578 aa).

This sequence belongs to the class-II aminoacyl-tRNA synthetase family. ProS type 1 subfamily. In terms of assembly, homodimer.

It localises to the cytoplasm. The enzyme catalyses tRNA(Pro) + L-proline + ATP = L-prolyl-tRNA(Pro) + AMP + diphosphate. In terms of biological role, catalyzes the attachment of proline to tRNA(Pro) in a two-step reaction: proline is first activated by ATP to form Pro-AMP and then transferred to the acceptor end of tRNA(Pro). As ProRS can inadvertently accommodate and process non-cognate amino acids such as alanine and cysteine, to avoid such errors it has two additional distinct editing activities against alanine. One activity is designated as 'pretransfer' editing and involves the tRNA(Pro)-independent hydrolysis of activated Ala-AMP. The other activity is designated 'posttransfer' editing and involves deacylation of mischarged Ala-tRNA(Pro). The misacylated Cys-tRNA(Pro) is not edited by ProRS. This chain is Proline--tRNA ligase, found in Burkholderia cenocepacia (strain HI2424).